The primary structure comprises 397 residues: Gamma tubulin complex adapter mto2 (397 aa).

The span at 1-13 shows a compositional bias: basic and acidic residues; the sequence is MSEHNYQSDREVA. Disordered stretches follow at residues 1–44, 269–298, and 346–397; these read MSEH…WRAG, YTSS…PFPS, and RSDP…TPSP. Composition is skewed to polar residues over residues 22–37, 269–281, 352–369, and 382–397; these read ASAN…STPR, YTSS…QRMA, RHVS…SPTS, and SPAS…TPSP. Ser366 and Ser396 each carry phosphoserine.

Interacts with mto1; the interaction is direct and required for efficient binding to the gamma-tubulin complex. Interacts with gamma tubulin complex subunits alp4, alp6 and gtb1.

The protein localises to the cytoplasm. Its subcellular location is the cytoskeleton. It is found in the microtubule organizing center. It localises to the spindle pole body. Its function is as follows. Acts together with mto1 to promote nucleation of at least a subset of cytoplasmic microtubules, by recruiting the gamma-tubulin complex to the interphase microtubule organizing center (iMTOC) and to the equatorial MTOC (eMTOC) during anaphase. Does not appear to be required for cytoplasmic astral microtubule nucleation from the spindle pole body (SPB). Required to establish the eMTOC, and thereby to tether the cytokinetic actin ring. The sequence is that of Gamma tubulin complex adapter mto2 from Schizosaccharomyces pombe (strain 972 / ATCC 24843) (Fission yeast).